Reading from the N-terminus, the 80-residue chain is Cell division protein ZapB (80 aa).

Positions 3–80 (FEVFEKLESK…ALLGKMEDVQ (78 aa)) form a coiled coil.

The protein belongs to the ZapB family. Homodimer. The ends of the coiled-coil dimer bind to each other, forming polymers. Interacts with FtsZ.

The protein localises to the cytoplasm. Its function is as follows. Non-essential, abundant cell division factor that is required for proper Z-ring formation. It is recruited early to the divisome by direct interaction with FtsZ, stimulating Z-ring assembly and thereby promoting cell division earlier in the cell cycle. Its recruitment to the Z-ring requires functional FtsA or ZipA. The sequence is that of Cell division protein ZapB from Proteus mirabilis (strain HI4320).